The primary structure comprises 346 residues: Nucleoplasmin-like protein ANO39 (346 aa).

S2 carries the post-translational modification N-acetylserine. The N-linked (GlcNAc...) asparagine glycan is linked to N85. The span at 123–141 shows a compositional bias: acidic residues; it reads DEEELEEDDEEEEEEDEVE. The interval 123–285 is disordered; that stretch reads DEEELEEDDE…KAKAKTDTKL (163 aa). At S145 the chain carries Phosphoserine; by CDC2. Residues 171–180 show a composition bias toward basic and acidic residues; that stretch reads AKLDKDADKK. Positions 181-247 are enriched in acidic residues; that stretch reads EDDDEEEDDE…EEEEDEDEES (67 aa). N-linked (GlcNAc...) asparagine glycosylation occurs at N264. Residues 271-285 are compositionally biased toward basic and acidic residues; the sequence is GDNKPKAKAKTDTKL.

Belongs to the nucleoplasmin family. In terms of processing, phosphorylation occurs in oocytes during the progression of the first meiotic M phase. No phosphorylation is observed in immature oocytes. In terms of tissue distribution, expressed specifically in the oocytes of the ovaries.

Its subcellular location is the nucleus. The protein resides in the nucleolus. It is found in the cytoplasm. Functionally, binds double-stranded RNA and both single-stranded and double-stranded DNA. This is Nucleoplasmin-like protein ANO39 from Patiria pectinifera (Starfish).